Reading from the N-terminus, the 487-residue chain is Beta-barrel assembly-enhancing protease (487 aa).

The signal sequence occupies residues 1 to 27; sequence MFRQLKKNLVATLIAALALGQVAPAFA. His-136 contacts Zn(2+). Glu-137 is a catalytic residue. His-140 and Glu-201 together coordinate Zn(2+). The active-site Proton donor is the Asp-205. 2 TPR repeats span residues 309 to 342 and 427 to 460; these read HAAQ…EPNN and DQEL…AKLG.

This sequence belongs to the peptidase M48 family. BepA subfamily. It depends on Zn(2+) as a cofactor.

The protein resides in the periplasm. Its function is as follows. Functions both as a chaperone and a metalloprotease. Maintains the integrity of the outer membrane by promoting either the assembly or the elimination of outer membrane proteins, depending on their folding state. In Salmonella typhi, this protein is Beta-barrel assembly-enhancing protease.